The sequence spans 910 residues: Translation factor GUF1 homolog, mitochondrial (910 aa).

Residues 126 to 188 (RRGNGLPFER…DGGGAPEHPQ (63 aa)) are disordered. The region spanning 189-366 (QNVRNFCILA…RIVSDIPCPA (178 aa)) is the tr-type G domain. GTP contacts are provided by residues 198-205 (AHIDSGKS), 259-263 (DTPGH), and 313-316 (NKID). The disordered stretch occupies residues 639–683 (GSGDGRADGSADGSADGSADGSGDSSAHGSSDRRGAGCARGSDDI). The span at 646-667 (DGSADGSADGSADGSGDSSAHG) shows a compositional bias: low complexity.

Belongs to the TRAFAC class translation factor GTPase superfamily. Classic translation factor GTPase family. LepA subfamily.

The protein resides in the mitochondrion inner membrane. The enzyme catalyses GTP + H2O = GDP + phosphate + H(+). In terms of biological role, promotes mitochondrial protein synthesis. May act as a fidelity factor of the translation reaction, by catalyzing a one-codon backward translocation of tRNAs on improperly translocated ribosomes. Binds to mitochondrial ribosomes in a GTP-dependent manner. The sequence is that of Translation factor GUF1 homolog, mitochondrial from Plasmodium vivax (strain Salvador I).